The following is a 318-amino-acid chain: tRNA uridine(34) hydroxylase (318 aa).

One can recognise a Rhodanese domain in the interval 123–217 (EDDDTVIIDA…YGKDPETKGE (95 aa)). Residue Cys-177 is the Cysteine persulfide intermediate of the active site.

Belongs to the TrhO family.

It carries out the reaction uridine(34) in tRNA + AH2 + O2 = 5-hydroxyuridine(34) in tRNA + A + H2O. Its function is as follows. Catalyzes oxygen-dependent 5-hydroxyuridine (ho5U) modification at position 34 in tRNAs. The protein is tRNA uridine(34) hydroxylase of Staphylococcus aureus (strain USA300).